A 740-amino-acid chain; its full sequence is Phosphoribosylformylglycinamidine synthase subunit PurL (740 aa).

Residue H53 is part of the active site. ATP contacts are provided by Y56 and K95. E97 is a binding site for Mg(2+). Residues 98-101 (SHNH) and R120 each bind substrate. The active-site Proton acceptor is H99. D121 is a Mg(2+) binding site. Q244 provides a ligand contact to substrate. D272 provides a ligand contact to Mg(2+). 316–318 (ESQ) is a binding site for substrate. Positions 497 and 534 each coordinate ATP. Residue N535 coordinates Mg(2+). S537 is a substrate binding site.

The protein belongs to the FGAMS family. In terms of assembly, monomer. Part of the FGAM synthase complex composed of 1 PurL, 1 PurQ and 2 PurS subunits.

It localises to the cytoplasm. The catalysed reaction is N(2)-formyl-N(1)-(5-phospho-beta-D-ribosyl)glycinamide + L-glutamine + ATP + H2O = 2-formamido-N(1)-(5-O-phospho-beta-D-ribosyl)acetamidine + L-glutamate + ADP + phosphate + H(+). The protein operates within purine metabolism; IMP biosynthesis via de novo pathway; 5-amino-1-(5-phospho-D-ribosyl)imidazole from N(2)-formyl-N(1)-(5-phospho-D-ribosyl)glycinamide: step 1/2. In terms of biological role, part of the phosphoribosylformylglycinamidine synthase complex involved in the purines biosynthetic pathway. Catalyzes the ATP-dependent conversion of formylglycinamide ribonucleotide (FGAR) and glutamine to yield formylglycinamidine ribonucleotide (FGAM) and glutamate. The FGAM synthase complex is composed of three subunits. PurQ produces an ammonia molecule by converting glutamine to glutamate. PurL transfers the ammonia molecule to FGAR to form FGAM in an ATP-dependent manner. PurS interacts with PurQ and PurL and is thought to assist in the transfer of the ammonia molecule from PurQ to PurL. This is Phosphoribosylformylglycinamidine synthase subunit PurL from Rhodospirillum rubrum (strain ATCC 11170 / ATH 1.1.1 / DSM 467 / LMG 4362 / NCIMB 8255 / S1).